We begin with the raw amino-acid sequence, 185 residues long: Elongation factor P (185 aa).

It belongs to the elongation factor P family.

It is found in the cytoplasm. It participates in protein biosynthesis; polypeptide chain elongation. Its function is as follows. Involved in peptide bond synthesis. Stimulates efficient translation and peptide-bond synthesis on native or reconstituted 70S ribosomes in vitro. Probably functions indirectly by altering the affinity of the ribosome for aminoacyl-tRNA, thus increasing their reactivity as acceptors for peptidyl transferase. In Staphylococcus carnosus (strain TM300), this protein is Elongation factor P.